Consider the following 387-residue polypeptide: L-aspartate:5-guanidino-3-methyl-2-oxopentanoate transaminase (387 aa).

Lys-237 is subject to N6-(pyridoxal phosphate)lysine.

It belongs to the class-I pyridoxal-phosphate-dependent aminotransferase family. It depends on pyridoxal 5'-phosphate as a cofactor.

It catalyses the reaction (3R)-5-guanidino-3-methyl-2-oxopentanoate + L-aspartate = (3R)-3-methyl-L-arginine + oxaloacetate. The protein operates within antibiotic biosynthesis. Its function is as follows. Aminotransferase involved in the formation of the rare amino acid 3-methylarginine (MeArg), which is used as a potent antibiotic against the closely related soybean pathogen P.syringae pv. glycinea. Probably catalyzes transamination from the donor L-aspartate to 5-guanidino-3-methyl-2-oxopentanoic acid, generating 3-methylarginine. The protein is L-aspartate:5-guanidino-3-methyl-2-oxopentanoate transaminase of Pseudomonas syringae pv. syringae.